The following is a 475-amino-acid chain: Ribulose bisphosphate carboxylase large chain (475 aa).

A propeptide spanning residues 1 to 2 (MS) is cleaved from the precursor. Residue Pro-3 is modified to N-acetylproline. Residue Lys-14 is modified to N6,N6,N6-trimethyllysine. The substrate site is built by Asn-123 and Thr-173. Lys-175 functions as the Proton acceptor in the catalytic mechanism. Residue Lys-177 coordinates substrate. Mg(2+)-binding residues include Lys-201, Asp-203, and Glu-204. Lys-201 carries the post-translational modification N6-carboxylysine. The Proton acceptor role is filled by His-294. Substrate is bound by residues Arg-295, His-327, and Ser-379.

Belongs to the RuBisCO large chain family. Type I subfamily. In terms of assembly, heterohexadecamer of 8 large chains and 8 small chains; disulfide-linked. The disulfide link is formed within the large subunit homodimers. The cofactor is Mg(2+). The disulfide bond which can form in the large chain dimeric partners within the hexadecamer appears to be associated with oxidative stress and protein turnover.

It localises to the plastid. Its subcellular location is the chloroplast. It catalyses the reaction 2 (2R)-3-phosphoglycerate + 2 H(+) = D-ribulose 1,5-bisphosphate + CO2 + H2O. It carries out the reaction D-ribulose 1,5-bisphosphate + O2 = 2-phosphoglycolate + (2R)-3-phosphoglycerate + 2 H(+). In terms of biological role, ruBisCO catalyzes two reactions: the carboxylation of D-ribulose 1,5-bisphosphate, the primary event in carbon dioxide fixation, as well as the oxidative fragmentation of the pentose substrate in the photorespiration process. Both reactions occur simultaneously and in competition at the same active site. This is Ribulose bisphosphate carboxylase large chain from Quercus rubra (Northern red oak).